A 323-amino-acid polypeptide reads, in one-letter code: Sphingolipid delta(4)-desaturase DES1 (323 aa).

Glycine 2 carries N-myristoyl glycine lipidation. The next 2 helical transmembrane spans lie at 41-61 (HNLIWIVAMMLLVQLASFYLV) and 68-88 (WVIFWSYVFGSCLNHSMTLAI). The Histidine box-1 motif lies at 89–93 (HEISH). The helical transmembrane segment at 104–124 (WNRWFGMFANLSLGVPYSISF) threads the bilayer. The Histidine box-2 signature appears at 128–132 (HMDHH). 3 consecutive transmembrane segments (helical) span residues 152–172 (FFCTTFRKFVWVILQPLFYAF), 184–204 (YLEIINTVIQITFDIIIYYVF), and 209–229 (LVYMLAATLLGLGLHPISGHF). Positions 259–263 (HNEHH) match the Histidine box-3 motif. Phosphoserine is present on serine 307.

It belongs to the fatty acid desaturase type 1 family. DEGS subfamily. In terms of assembly, interacts with RLBP1; the interaction increases synthesis of chromophore-precursors by DEGS1. Post-translationally, myristoylation can target the enzyme to the mitochondria leading to an increase in ceramide levels. In terms of tissue distribution, detected in testis. Detected in pachytene spermatocytes and round spermatids. Expressed in retina and retinal pigment epithelium by Mueller cells (at protein level).

Its subcellular location is the mitochondrion membrane. The protein localises to the endoplasmic reticulum membrane. It catalyses the reaction an N-acylsphinganine + 2 Fe(II)-[cytochrome b5] + O2 + 2 H(+) = an N-acylsphing-4-enine + 2 Fe(III)-[cytochrome b5] + 2 H2O. It carries out the reaction all-trans-retinol = 11-cis-retinol. The catalysed reaction is all-trans-retinol = 9-cis-retinol. The enzyme catalyses all-trans-retinol = 13-cis-retinol. It catalyses the reaction 11-cis-retinol = 13-cis-retinol. It carries out the reaction 11-cis-retinol = 9-cis-retinol. Functionally, has sphingolipid-delta-4-desaturase activity. Converts D-erythro-sphinganine to D-erythro-sphingosine (E-sphing-4-enine). Catalyzes the equilibrium isomerization of retinols. The chain is Sphingolipid delta(4)-desaturase DES1 from Mus musculus (Mouse).